A 218-amino-acid chain; its full sequence is Ribonuclease T (218 aa).

In terms of domain architecture, Exonuclease spans 22–196 (VVVDVETAGF…YDAMKTAELF (175 aa)). Residues D25, E27, H183, and D188 each coordinate Mg(2+). H183 serves as the catalytic Proton donor/acceptor.

It belongs to the RNase T family. In terms of assembly, homodimer. The cofactor is Mg(2+).

In terms of biological role, trims short 3' overhangs of a variety of RNA species, leaving a one or two nucleotide 3' overhang. Responsible for the end-turnover of tRNA: specifically removes the terminal AMP residue from uncharged tRNA (tRNA-C-C-A). Also appears to be involved in tRNA biosynthesis. The protein is Ribonuclease T of Hahella chejuensis (strain KCTC 2396).